The following is a 447-amino-acid chain: UDP-N-acetylmuramoylalanine--D-glutamate ligase (447 aa).

An ATP-binding site is contributed by 130-136; that stretch reads GTSGKTT.

It belongs to the MurCDEF family.

The protein resides in the cytoplasm. The catalysed reaction is UDP-N-acetyl-alpha-D-muramoyl-L-alanine + D-glutamate + ATP = UDP-N-acetyl-alpha-D-muramoyl-L-alanyl-D-glutamate + ADP + phosphate + H(+). Its pathway is cell wall biogenesis; peptidoglycan biosynthesis. Cell wall formation. Catalyzes the addition of glutamate to the nucleotide precursor UDP-N-acetylmuramoyl-L-alanine (UMA). This Oleidesulfovibrio alaskensis (strain ATCC BAA-1058 / DSM 17464 / G20) (Desulfovibrio alaskensis) protein is UDP-N-acetylmuramoylalanine--D-glutamate ligase.